A 64-amino-acid polypeptide reads, in one-letter code: uncharacterized protein (64 aa).

Positions 1 to 26 (MVVKENFCGACLTIPLAFAGAGTAIG) are cleaved as a signal peptide. Residues 33-53 (IKKWSIVITIISLLLTVWFIY) form a helical membrane-spanning segment.

It belongs to the IIV-6 010R family.

The protein localises to the host membrane. This is an uncharacterized protein from Aedes vexans (Inland floodwater mosquito).